A 316-amino-acid chain; its full sequence is Glutathione synthetase (316 aa).

Positions 125-310 constitute an ATP-grasp domain; that stretch reads KLFTAWFSDL…ITGMLMDAIE (186 aa). The N-beta-linked (GlcNAc) arginine glycan is linked to Arg256. 2 residues coordinate Mg(2+): Glu281 and Asn283.

The protein belongs to the prokaryotic GSH synthase family. Mg(2+) is required as a cofactor. Mn(2+) serves as cofactor.

The catalysed reaction is gamma-L-glutamyl-L-cysteine + glycine + ATP = glutathione + ADP + phosphate + H(+). It functions in the pathway sulfur metabolism; glutathione biosynthesis; glutathione from L-cysteine and L-glutamate: step 2/2. The polypeptide is Glutathione synthetase (Escherichia coli O127:H6 (strain E2348/69 / EPEC)).